The sequence spans 198 residues: Charged multivesicular body protein 2a homolog 2 (198 aa).

Positions 11 to 42 (KEVLRENQRNLNKSMREIDRERVALQNQEKKI) form a coiled coil.

This sequence belongs to the SNF7 family. As to quaternary structure, probable core component of the endosomal sorting required for transport complex III (ESCRT-III). ESCRT-III components are thought to multimerize to form a flat lattice on the perimeter membrane of the endosome.

It localises to the endosome membrane. Probable core component of the endosomal sorting required for transport complex III (ESCRT-III) which is involved in multivesicular bodies (MVBs) formation and sorting of endosomal cargo proteins into MVBs. MVBs contain intraluminal vesicles (ILVs) that are generated by invagination and scission from the limiting membrane of the endosome and are delivered to lysosomes enabling degradation of membrane proteins. This Dictyostelium discoideum (Social amoeba) protein is Charged multivesicular body protein 2a homolog 2 (chmp2a2).